Consider the following 163-residue polypeptide: Neurotrophin-3 (163 aa).

A signal peptide spans 1–3; the sequence is IQS. Residues 4 to 119 constitute a propeptide that is removed on maturation; that stretch reads TSMDQGILTE…VLNRTSRRKR (116 aa). An N-linked (GlcNAc...) asparagine glycan is attached at Asn-112. Residues 113 to 133 are disordered; that stretch reads RTSRRKREGKSHRGEYSVCDS. Residues 123–133 are compositionally biased toward basic and acidic residues; that stretch reads SHRGEYSVCDS.

Belongs to the NGF-beta family.

It localises to the secreted. Functionally, seems to promote the survival of visceral and proprioceptive sensory neurons. In Charina bottae (Northern rubber boa), this protein is Neurotrophin-3 (NTF3).